The following is a 276-amino-acid chain: 2-dehydro-3-deoxyphosphooctonate aldolase (276 aa).

The protein belongs to the KdsA family.

The protein resides in the cytoplasm. The enzyme catalyses D-arabinose 5-phosphate + phosphoenolpyruvate + H2O = 3-deoxy-alpha-D-manno-2-octulosonate-8-phosphate + phosphate. The protein operates within carbohydrate biosynthesis; 3-deoxy-D-manno-octulosonate biosynthesis; 3-deoxy-D-manno-octulosonate from D-ribulose 5-phosphate: step 2/3. It participates in bacterial outer membrane biogenesis; lipopolysaccharide biosynthesis. This Helicobacter pylori (strain P12) protein is 2-dehydro-3-deoxyphosphooctonate aldolase.